A 265-amino-acid chain; its full sequence is Hydroxyethylthiazole kinase (265 aa).

Methionine 50 contacts substrate. The ATP site is built by arginine 125 and threonine 171. Glycine 198 contacts substrate.

The protein belongs to the Thz kinase family. The cofactor is Mg(2+).

It catalyses the reaction 5-(2-hydroxyethyl)-4-methylthiazole + ATP = 4-methyl-5-(2-phosphooxyethyl)-thiazole + ADP + H(+). The protein operates within cofactor biosynthesis; thiamine diphosphate biosynthesis; 4-methyl-5-(2-phosphoethyl)-thiazole from 5-(2-hydroxyethyl)-4-methylthiazole: step 1/1. In terms of biological role, catalyzes the phosphorylation of the hydroxyl group of 4-methyl-5-beta-hydroxyethylthiazole (THZ). This is Hydroxyethylthiazole kinase from Salmonella newport (strain SL254).